The following is a 388-amino-acid chain: Putative 8-amino-7-oxononanoate synthase (388 aa).

R23 is a substrate binding site. Position 110 to 111 (110 to 111 (GY)) interacts with pyridoxal 5'-phosphate. H135 is a substrate binding site. Pyridoxal 5'-phosphate-binding positions include S182, 207–210 (DDAH), and 238–241 (TLSK). K241 bears the N6-(pyridoxal phosphate)lysine mark. Residue T355 participates in substrate binding.

This sequence belongs to the class-II pyridoxal-phosphate-dependent aminotransferase family. BioF subfamily. As to quaternary structure, homodimer. It depends on pyridoxal 5'-phosphate as a cofactor.

The catalysed reaction is 6-carboxyhexanoyl-[ACP] + L-alanine + H(+) = (8S)-8-amino-7-oxononanoate + holo-[ACP] + CO2. Its pathway is cofactor biosynthesis; biotin biosynthesis. In terms of biological role, catalyzes the decarboxylative condensation of pimeloyl-[acyl-carrier protein] and L-alanine to produce 8-amino-7-oxononanoate (AON), [acyl-carrier protein], and carbon dioxide. The sequence is that of Putative 8-amino-7-oxononanoate synthase (bioF) from Thermodesulfovibrio yellowstonii (strain ATCC 51303 / DSM 11347 / YP87).